Reading from the N-terminus, the 340-residue chain is Peroxisomal coenzyme A diphosphatase 1, peroxisomal (340 aa).

The transit peptide at M1 to R7 directs the protein to the peroxisome. Residues K37 to E199 enclose the Nudix hydrolase domain. Residues G77–G99 carry the Nudix box motif. Residues E93 and E97 each contribute to the Mg(2+) site.

This sequence belongs to the Nudix hydrolase family. PCD1 subfamily. Mn(2+) is required as a cofactor. The cofactor is Mg(2+). In terms of processing, the size of the cleaved transit peptide can be of 7 or 8 residues.

It localises to the peroxisome. The enzyme catalyses CoA + H2O = (R)-4'-phosphopantetheine + adenosine 3',5'-bisphosphate + 2 H(+). It catalyses the reaction CoA-disulfide + H2O = 4'-phosphopantetheinyl-CoA disulfide + adenosine 3',5'-bisphosphate + 2 H(+). The catalysed reaction is 8-oxo-dGTP + H2O = 8-oxo-dGMP + diphosphate + H(+). It carries out the reaction 2-oxo-dATP + H2O = 2-oxo-dAMP + diphosphate + H(+). In terms of biological role, diphosphatase (pyrophosphatase) with specificity for coenzyme A and CoA derivatives. Catalyzes the hydrolysis of the diphosphate linkage in CoA to give 3',5'-ADP and 4'-phosphopantetheine. Prefers oxidized CoA disulfide (CoASSCoA) over CoA as a substrate. May be required to remove potentially toxic oxidized CoA disulfide from peroxisomes to maintain the capacity for beta-oxidation of fatty acids. Can also hydrolyze 8-oxo-dGTP and 2-OH-dATP in vitro; therefore it may function as a sanitizing enzyme for oxidized nucleotides and may contribute to prevention of spontaneous mutagenesis due to the misincorporation of these oxidized nucleotides during DNA synthesis. Shows moderate activity in vitro with several short chain acyl-CoA esters and very low activity on 3'-dephospho-CoA while is not active with (deoxy)nucleoside 5'-triphosphates, nucleoside 5'-di- or monophosphates, diadenosine polyphosphates, nucleoside 5'-diphosphosugars, cytidine 5'-diphosphoalcohols, NAD(+), NADH, or FAD. The chain is Peroxisomal coenzyme A diphosphatase 1, peroxisomal (PCD1) from Saccharomyces cerevisiae (strain ATCC 204508 / S288c) (Baker's yeast).